The following is a 519-amino-acid chain: Ubiquitin carboxyl-terminal hydrolase 30 (519 aa).

At 1-52 (MSWAPVSTWSRRTPLAACCSAPELPPAGAWKACAAGSLRIGPQGRCKMMKNW) the chain is on the mitochondrial intermembrane side. Residues 53-73 (GMIGGIAAALAAGIYVLWGPI) form a helical membrane-spanning segment. The Cytoplasmic segment spans residues 74-519 (SDRKKYRKGL…HPEDQRAAEK (446 aa)). One can recognise a USP domain in the interval 85 to 504 (PGLLNLGNTC…SAYLLFYERI (420 aa)). Catalysis depends on cysteine 94, which acts as the Nucleophile. The disordered stretch occupies residues 379-405 (SKQPANHLSAAEQETTDGKEGGAQNPT). Histidine 455 acts as the Proton acceptor in catalysis.

The protein belongs to the peptidase C19 family.

The protein resides in the mitochondrion outer membrane. It catalyses the reaction Thiol-dependent hydrolysis of ester, thioester, amide, peptide and isopeptide bonds formed by the C-terminal Gly of ubiquitin (a 76-residue protein attached to proteins as an intracellular targeting signal).. Functionally, deubiquitinating enzyme that acts as a key inhibitor of mitophagy by counteracting the action of parkin (PRKN). This Xenopus tropicalis (Western clawed frog) protein is Ubiquitin carboxyl-terminal hydrolase 30 (usp30).